The sequence spans 177 residues: Interleukin-19 (177 aa).

An N-terminal signal peptide occupies residues 1–24 (MKLQCVSLWLLGTILILCSVDNHG). 3 cysteine pairs are disulfide-bonded: cysteine 28/cysteine 121, cysteine 75/cysteine 127, and cysteine 76/cysteine 129. An N-linked (GlcNAc...) asparagine glycan is attached at asparagine 56. An N-linked (GlcNAc...) asparagine glycan is attached at asparagine 135.

This sequence belongs to the IL-10 family.

Its subcellular location is the secreted. Functionally, cytokine that functions as an anti-inflammatory and proangiogenic factor. Polarizes adaptive immunity to an anti-inflammatory phenotype through induction of T-helper 2 responses by both down-regulation of IFN-gamma and up-regulation of IL4 and IL13. Produced by osteocytes, stimulates granulopoiesis and neutrophil formation. Exerts its biological effect through a receptor complex consisting of a heterodimer of IL20RA and IL20RB. In turn, activates the Janus kinase (JAK) and signal transducer and activator of transcription (STAT) pathway, and importantly, STAT3. This is Interleukin-19 (IL19) from Homo sapiens (Human).